The primary structure comprises 220 residues: Large ribosomal subunit protein uL16 (220 aa).

This sequence belongs to the universal ribosomal protein uL16 family. In terms of assembly, component of the small ribosomal subunit. Mature ribosomes consist of a small (40S) and a large (60S) subunit. The 40S subunit contains about 33 different proteins and 1 molecule of RNA (18S). The 60S subunit contains about 49 different proteins and 3 molecules of RNA (25S, 5.8S and 5S).

This Zea mays (Maize) protein is Large ribosomal subunit protein uL16 (RPL10).